Here is a 776-residue protein sequence, read N- to C-terminus: Disintegrin and metalloproteinase domain-containing protein 7 (776 aa).

An N-terminal signal peptide occupies residues 1–23 (MLPGCIFLMILLILQVKEKVILG). Positions 24–176 (VEGQQLVYPK…NYSCTELNFT (153 aa)) are excised as a propeptide. The Extracellular segment spans residues 26–669 (GQQLVYPKKL…WEETLNVTNV (644 aa)). N84, N167, and N174 each carry an N-linked (GlcNAc...) asparagine glycan. Residues 199–394 (KYIELFIVAD…YKPTCMLNIP (196 aa)) form the Peptidase M12B domain. 4 cysteine pairs are disulfide-bonded: C310-C389, C350-C373, C352-C357, and C460-C480. The Disintegrin domain occupies 402 to 488 (FQFCGNKKLD…ACPKDQFRVN (87 aa)). N584, N629, and N665 each carry an N-linked (GlcNAc...) asparagine glycan. A helical transmembrane segment spans residues 670–690 (AILIVVLVLVIVGIGVLILLI). Over 691–776 (RYQKCIKLKQ…GIADPNQSAK (86 aa)) the chain is Cytoplasmic. The tract at residues 757 to 776 (TLKPASKDSRGIADPNQSAK) is disordered.

In terms of assembly, interacts with ITM2B in sperm; the interaction increases following capacitation. Interacts with HSPA5 and CANX.

It is found in the membrane. Required for normal male fertility via maintenance of epithelial cell morphology in the caput epididymis and subsequently correct epididymis lumen structure required for sperm development. Plays a role in sperm motility, flagella morphology and tyrosine phosphorylation during sperm capacitance. Plays a role in normal expression levels of HSPA5, ITM2B and ADAM2 in sperm both prior to and post-capacitation. This is a non catalytic metalloprotease-like protein. The polypeptide is Disintegrin and metalloproteinase domain-containing protein 7 (ADAM7) (Macaca fascicularis (Crab-eating macaque)).